The chain runs to 230 residues: Large ribosomal subunit protein uL1 (230 aa).

The protein belongs to the universal ribosomal protein uL1 family. Part of the 50S ribosomal subunit.

In terms of biological role, binds directly to 23S rRNA. The L1 stalk is quite mobile in the ribosome, and is involved in E site tRNA release. Functionally, protein L1 is also a translational repressor protein, it controls the translation of the L11 operon by binding to its mRNA. This chain is Large ribosomal subunit protein uL1, found in Sulfurimonas denitrificans (strain ATCC 33889 / DSM 1251) (Thiomicrospira denitrificans (strain ATCC 33889 / DSM 1251)).